The chain runs to 206 residues: MAKFDVYDLSKKKVGELDLADAVFAGEVNEHLFYEVVKAKLASDRSGTHAVKNRSLVSGGGKKPWKQKHTGRARQGSTRASQWVGGGKAMGPKPRDYSYDVPKKVRKAALRSALALRSKDQKLVIVQEWKPGAPKTAAAAKVLAALGAKKALVVDDAANLALAKSVRNLDGSDFLAVEGLNVYDILRHDALVLTADTAKKLEASLS.

Residues threonine 48–tyrosine 97 are disordered. Residues lysine 63–arginine 72 show a composition bias toward basic residues.

It belongs to the universal ribosomal protein uL4 family. As to quaternary structure, part of the 50S ribosomal subunit.

Functionally, one of the primary rRNA binding proteins, this protein initially binds near the 5'-end of the 23S rRNA. It is important during the early stages of 50S assembly. It makes multiple contacts with different domains of the 23S rRNA in the assembled 50S subunit and ribosome. Forms part of the polypeptide exit tunnel. This chain is Large ribosomal subunit protein uL4, found in Anaeromyxobacter sp. (strain K).